Reading from the N-terminus, the 82-residue chain is Cytochrome c-551 (82 aa).

Heme c-binding residues include Cys-12, Cys-15, His-16, and Met-61.

In terms of processing, binds 1 heme c group covalently per subunit.

Its function is as follows. This is a prokaryotic monoheme cytochrome, unreactive with mitochondrial cytochrome C oxidase or reductase. It functions in nitrite and nitrate respiration in Pseudomonas, but it is also found in other bacteria. The protein is Cytochrome c-551 of Pseudomonas denitrificans.